Reading from the N-terminus, the 859-residue chain is DNA mismatch repair protein MutS (859 aa).

622 to 629 contacts ATP; sequence GPNMGGKS.

The protein belongs to the DNA mismatch repair MutS family.

Functionally, this protein is involved in the repair of mismatches in DNA. It is possible that it carries out the mismatch recognition step. This protein has a weak ATPase activity. This is DNA mismatch repair protein MutS from Syntrophomonas wolfei subsp. wolfei (strain DSM 2245B / Goettingen).